The sequence spans 508 residues: Aldehyde dehydrogenase (508 aa).

Residues Glu264 and Cys303 contribute to the active site.

Belongs to the aldehyde dehydrogenase family.

It carries out the reaction acetaldehyde + NAD(+) + H2O = acetate + NADH + 2 H(+). It participates in organosulfur degradation. Functionally, catalyzes the NAD(+)-dependent oxidation of acetaldehyde to acetate. The polypeptide is Aldehyde dehydrogenase (Paracoccus denitrificans (strain Pd 1222)).